We begin with the raw amino-acid sequence, 453 residues long: Bifunctional protein GlmU (453 aa).

The interval 1–226 is pyrophosphorylase; sequence MKFSAVILAA…AIEVEGVNDR (226 aa). Residues 8–11, Lys-22, Gln-73, 78–79, 100–102, Gly-137, Glu-151, Asn-166, and Asn-224 each bind UDP-N-acetyl-alpha-D-glucosamine; these read LAAG, GT, and YGD. Asp-102 is a Mg(2+) binding site. Asn-224 is a binding site for Mg(2+). Residues 227 to 247 form a linker region; sequence AQLARLERAFQSMQAQKLLEQ. An N-acetyltransferase region spans residues 248 to 453; the sequence is GVMLRDPARF…TGWQRPVKQK (206 aa). 2 residues coordinate UDP-N-acetyl-alpha-D-glucosamine: Arg-330 and Lys-348. His-360 serves as the catalytic Proton acceptor. UDP-N-acetyl-alpha-D-glucosamine-binding residues include Tyr-363 and Asn-374. Residues Ala-377, 383–384, Ser-402, Ala-420, and Arg-437 each bind acetyl-CoA; that span reads NY.

In the N-terminal section; belongs to the N-acetylglucosamine-1-phosphate uridyltransferase family. This sequence in the C-terminal section; belongs to the transferase hexapeptide repeat family. In terms of assembly, homotrimer. Requires Mg(2+) as cofactor.

The protein localises to the cytoplasm. The catalysed reaction is alpha-D-glucosamine 1-phosphate + acetyl-CoA = N-acetyl-alpha-D-glucosamine 1-phosphate + CoA + H(+). It carries out the reaction N-acetyl-alpha-D-glucosamine 1-phosphate + UTP + H(+) = UDP-N-acetyl-alpha-D-glucosamine + diphosphate. It functions in the pathway nucleotide-sugar biosynthesis; UDP-N-acetyl-alpha-D-glucosamine biosynthesis; N-acetyl-alpha-D-glucosamine 1-phosphate from alpha-D-glucosamine 6-phosphate (route II): step 2/2. Its pathway is nucleotide-sugar biosynthesis; UDP-N-acetyl-alpha-D-glucosamine biosynthesis; UDP-N-acetyl-alpha-D-glucosamine from N-acetyl-alpha-D-glucosamine 1-phosphate: step 1/1. The protein operates within bacterial outer membrane biogenesis; LPS lipid A biosynthesis. Its function is as follows. Catalyzes the last two sequential reactions in the de novo biosynthetic pathway for UDP-N-acetylglucosamine (UDP-GlcNAc). The C-terminal domain catalyzes the transfer of acetyl group from acetyl coenzyme A to glucosamine-1-phosphate (GlcN-1-P) to produce N-acetylglucosamine-1-phosphate (GlcNAc-1-P), which is converted into UDP-GlcNAc by the transfer of uridine 5-monophosphate (from uridine 5-triphosphate), a reaction catalyzed by the N-terminal domain. The sequence is that of Bifunctional protein GlmU from Vibrio parahaemolyticus serotype O3:K6 (strain RIMD 2210633).